We begin with the raw amino-acid sequence, 145 residues long: Putative phosphatidylglycerol/phosphatidylinositol transfer protein DDB_G0282179 (145 aa).

An N-terminal signal peptide occupies residues 1 to 20; it reads MIKTILLLLINFMLILIVNG. Residue Asn134 is glycosylated (N-linked (GlcNAc...) asparagine).

It belongs to the NPC2 family. Monomer.

Catalyzes the intermembrane transfer of phosphatidylglycerol and phosphatidylinositol. The sequence is that of Putative phosphatidylglycerol/phosphatidylinositol transfer protein DDB_G0282179 from Dictyostelium discoideum (Social amoeba).